An 88-amino-acid chain; its full sequence is Small ribosomal subunit protein uS17 (88 aa).

Belongs to the universal ribosomal protein uS17 family. In terms of assembly, part of the 30S ribosomal subunit.

Functionally, one of the primary rRNA binding proteins, it binds specifically to the 5'-end of 16S ribosomal RNA. This chain is Small ribosomal subunit protein uS17, found in Brevibacillus brevis (strain 47 / JCM 6285 / NBRC 100599).